The chain runs to 218 residues: Thiopurine S-methyltransferase (218 aa).

4 residues coordinate S-adenosyl-L-methionine: Trp10, Leu45, Glu66, and Arg123.

Belongs to the class I-like SAM-binding methyltransferase superfamily. TPMT family.

It is found in the cytoplasm. The enzyme catalyses S-adenosyl-L-methionine + a thiopurine = S-adenosyl-L-homocysteine + a thiopurine S-methylether.. This is Thiopurine S-methyltransferase from Shewanella sp. (strain MR-4).